Here is a 41-residue protein sequence, read N- to C-terminus: U-theraphotoxin-Lk1a (41 aa).

3 disulfides stabilise this stretch: cysteine 1/cysteine 16, cysteine 8/cysteine 21, and cysteine 15/cysteine 36.

The protein belongs to the neurotoxin 14 (magi-1) family. 08 (Ltx-4) subfamily. Expressed by the venom gland.

It is found in the secreted. Its function is as follows. Toxin that causes irreversible contractile paralysis in adult Aedes aegypti resulting in 100% mortality after 24 hours. The polypeptide is U-theraphotoxin-Lk1a (Lasiodora klugi (Bahia scarlet tarantula)).